The chain runs to 473 residues: Proline--tRNA ligase (473 aa).

It belongs to the class-II aminoacyl-tRNA synthetase family. ProS type 3 subfamily. Homodimer.

Its subcellular location is the cytoplasm. The enzyme catalyses tRNA(Pro) + L-proline + ATP = L-prolyl-tRNA(Pro) + AMP + diphosphate. Functionally, catalyzes the attachment of proline to tRNA(Pro) in a two-step reaction: proline is first activated by ATP to form Pro-AMP and then transferred to the acceptor end of tRNA(Pro). The polypeptide is Proline--tRNA ligase (Mesoplasma florum (strain ATCC 33453 / NBRC 100688 / NCTC 11704 / L1) (Acholeplasma florum)).